Reading from the N-terminus, the 2373-residue chain is Highly reducing polyketide synthase (2373 aa).

A Ketosynthase family 3 (KS3) domain is found at 19 to 446 (QEPIAVVGIA…GSNAHVIVEE (428 aa)). Active-site for beta-ketoacyl synthase activity residues include cysteine 192, histidine 329, and histidine 369. The segment at 560–874 (IFTGQGAQWP…QYTSAMARGA (315 aa)) is malonyl-CoA:ACP transacylase (MAT) domain. Residue serine 652 is the For malonyltransferase activity of the active site. Positions 942-1078 (HDLLGSKVLG…GLIRIDEDVP (137 aa)) are N-terminal hotdog fold. Positions 942–1241 (HDLLGSKVLG…LSGLRYTRID (300 aa)) are dehydratase (DH) domain. In terms of domain architecture, PKS/mFAS DH spans 942–1246 (HDLLGSKVLG…YTRIDTGPSV (305 aa)). Histidine 974 functions as the Proton acceptor; for dehydratase activity in the catalytic mechanism. The segment at 1090–1246 (SHQVDASLWH…YTRIDTGPSV (157 aa)) is C-terminal hotdog fold. Aspartate 1154 acts as the Proton donor; for dehydratase activity in catalysis. Positions 1669 to 1985 (GTTDSLIYSE…SANHIGKIVI (317 aa)) are enoyl reductase (ER) domain. A ketoreductase (KR) domain region spans residues 2010–2187 (GYLLIGGLKG…NSVDLGAIQD (178 aa)). Positions 2294-2370 (AIHDAVIDVT…QLAQKIVARL (77 aa)) constitute a Carrier domain. At serine 2330 the chain carries O-(pantetheine 4'-phosphoryl)serine.

Pantetheine 4'-phosphate is required as a cofactor.

Its pathway is mycotoxin biosynthesis. Functionally, highly reducing polyketide synthase; part of the gene cluster that mediates the biosynthesis of brefeldin A (BFA), a protein transport inhibitor that shows antiviral, antifungal, and antitumor properties. The proposed biosynthesis of BFA involves formation of an acyclic polyketide chain that is differentially tailored throughout the backbone. The highly reducing polyketide synthase Bref-PKS is proposed to synthesize the precisely reduced octaketide precursor, which could then be directly offloaded by the thiohydrolase enzyme Bref-TH followed by a cytochrome P450 monooxygenase-mediated formation of the cyclopentane ring and macrocyclization to afford 7-deoxy BFA. Alternatively, the first ring annulation can also occur on the ACP-tethered intermediate before the thiohydrolase release and lactonization. The C7-hydroxylation by another cytochrome P450 monooxygenase is believed to be the final step in the process to obtain the final structure of BFA. In addition to the HRPKS Bref-PKS and the thiohydrolase Bref-TH, the brefeldin A biosynthesis cluster contains 4 cytochrome p450 monooxygenases (called orf3 to orf6), as well a the probable cluster-specific transcription regulator orf8. This chain is Highly reducing polyketide synthase, found in Eupenicillium brefeldianum (Penicillium brefeldianum).